A 252-amino-acid chain; its full sequence is Protein TRANSPARENT TESTA 16 (252 aa).

An MADS-box domain is found at 1–61 (MGRGKIEIKK…GKLSEFCSEQ (61 aa)). The 91-residue stretch at 86–176 (QEQLHHEMEL…YRWLHEHRAA (91 aa)) folds into the K-box domain. The stretch at 121-174 (NELDGLERQLEHSVLKVRERKNELMQQQLENLSRKRRMLEEDNNNMYRWLHEHR) forms a coiled coil.

Interacts with AP1/AGL7, SEP1/AGL2, SEP2/AGL4, SEP3/AGL9 and AGL3/SEP4. Expressed in buds, flowers and immature seeds, but not in roots, stems, leaves, seedlings or siliques valves. Expression in seed coat is confined to the endothelium layer.

It localises to the nucleus. Its function is as follows. Transcription factor involved in the developmental regulation of the endothelium and in the accumulation of proanthocyanidins (PAs) or condensed tannins which give the seed its brown pigmentation after oxidation. Necessary for the normal activation of the BANYULS promoter in the endothelium body. Is required, together with AGL11/STK for the maternal control of endothelium formation, which is essential for female gametophyte development and fertilization, and seed formation. Interacts genetically with AGL1/SHP1 and AGL5/SHP2 in a partially antagonistic manner and represses AGL1/SHP1, AGL5/SHP2, and AGL8/FUL during flower development. Is essential for the coordination of cell divisions in ovule, seed coat development and endosperm formation. Mediates the crosstalk between endothelium and nucellus to ensure proper seed formation. Functions redundantly with AGL63/GOA to repress nucellus growth and promote its degeneration. Represses the negative regulator of autophagy and programmed cell death HVA22D in the proximal nucellus. Binds specifically to the CArG box DNA sequence 5'-CC (A/T)6 GG-3'. The polypeptide is Protein TRANSPARENT TESTA 16 (TT16) (Arabidopsis thaliana (Mouse-ear cress)).